Here is a 243-residue protein sequence, read N- to C-terminus: Type III pantothenate kinase (243 aa).

7-14 is a binding site for ATP; sequence DIGNTRLK. Substrate-binding positions include Tyr-95 and 102-105; that span reads GIDR. The Proton acceptor role is filled by Asp-104. Residue Thr-126 participates in ATP binding. Substrate is bound at residue Thr-177.

The protein belongs to the type III pantothenate kinase family. Homodimer. It depends on NH4(+) as a cofactor. K(+) is required as a cofactor.

It is found in the cytoplasm. It catalyses the reaction (R)-pantothenate + ATP = (R)-4'-phosphopantothenate + ADP + H(+). Its pathway is cofactor biosynthesis; coenzyme A biosynthesis; CoA from (R)-pantothenate: step 1/5. Catalyzes the phosphorylation of pantothenate (Pan), the first step in CoA biosynthesis. The chain is Type III pantothenate kinase from Acinetobacter baylyi (strain ATCC 33305 / BD413 / ADP1).